Reading from the N-terminus, the 311-residue chain is Transmembrane protein DDB_G0273707/DDB_G0273361 (311 aa).

A disordered region spans residues 1-113 (MNEIEVDNLS…NNNNNKNENN (113 aa)). A glycan (N-linked (GlcNAc...) asparagine) is linked at Asn-8. The span at 9 to 18 (LSHTNKNVAT) shows a compositional bias: polar residues. Residues Asn-35, Asn-38, Asn-62, and Asn-76 are each glycosylated (N-linked (GlcNAc...) asparagine). Low complexity-rich tracts occupy residues 37–67 (SNNSNNNNNNNNNNNNNNNNNNNNNNNSNSN) and 76–111 (NNSNNNNNNNNNNNNNNNNNNNNNNNNNNNNNNKNE). Residues 95-124 (NNNNNNNNNNNNNNKNENNNKIKNEKINIL) adopt a coiled-coil conformation. 5 consecutive transmembrane segments (helical) span residues 150-170 (LEEIGWSWLSSFIGILVLALL), 181-201 (IFLLGSFAASAVLIFGAPKSP), 208-228 (LVLGHIVSATVGSIIRVALVY), 235-255 (VACALAVSLAIVGMHFTKSIH), and 276-296 (FYYIFVPVASGSLTMLLTALI).

It localises to the membrane. The sequence is that of Transmembrane protein DDB_G0273707/DDB_G0273361 from Dictyostelium discoideum (Social amoeba).